Reading from the N-terminus, the 390-residue chain is Succinate--CoA ligase [ADP-forming] subunit beta (390 aa).

In terms of domain architecture, ATP-grasp spans 9–245; it reads KHLLKKYNIP…TTQEDEHETM (237 aa). Residues lysine 46, 53 to 55, glutamate 99, serine 102, and glutamate 107 each bind ATP; that span reads GRG. Mg(2+) contacts are provided by asparagine 200 and aspartate 214. Residues asparagine 265 and 322–324 each bind substrate; that span reads GIV.

It belongs to the succinate/malate CoA ligase beta subunit family. As to quaternary structure, heterotetramer of two alpha and two beta subunits. Mg(2+) serves as cofactor.

The enzyme catalyses succinate + ATP + CoA = succinyl-CoA + ADP + phosphate. The catalysed reaction is GTP + succinate + CoA = succinyl-CoA + GDP + phosphate. It participates in carbohydrate metabolism; tricarboxylic acid cycle; succinate from succinyl-CoA (ligase route): step 1/1. Its function is as follows. Succinyl-CoA synthetase functions in the citric acid cycle (TCA), coupling the hydrolysis of succinyl-CoA to the synthesis of either ATP or GTP and thus represents the only step of substrate-level phosphorylation in the TCA. The beta subunit provides nucleotide specificity of the enzyme and binds the substrate succinate, while the binding sites for coenzyme A and phosphate are found in the alpha subunit. This Coxiella burnetii (strain RSA 493 / Nine Mile phase I) protein is Succinate--CoA ligase [ADP-forming] subunit beta.